Consider the following 1176-residue polypeptide: Pesticidal crystal protein Cry1Aa (1176 aa).

It belongs to the delta endotoxin family.

In terms of biological role, promotes colloidosmotic lysis by binding to the midgut epithelial cells of many lepidopteran larvae. This is Pesticidal crystal protein Cry1Aa (cry1Aa) from Bacillus thuringiensis subsp. entomocidus.